A 523-amino-acid chain; its full sequence is 2-isopropylmalate synthase (523 aa).

One can recognise a Pyruvate carboxyltransferase domain in the interval 5 to 267; the sequence is VIIFDTTLRD…HTNINHHEIW (263 aa). Residues aspartate 14, histidine 202, histidine 204, and asparagine 238 each contribute to the Mn(2+) site. A regulatory domain region spans residues 392 to 523; that stretch reads RLDYFSVQSG…HNKENNKEIV (132 aa).

Belongs to the alpha-IPM synthase/homocitrate synthase family. LeuA type 1 subfamily. Homodimer. The cofactor is Mn(2+).

It is found in the cytoplasm. The catalysed reaction is 3-methyl-2-oxobutanoate + acetyl-CoA + H2O = (2S)-2-isopropylmalate + CoA + H(+). It participates in amino-acid biosynthesis; L-leucine biosynthesis; L-leucine from 3-methyl-2-oxobutanoate: step 1/4. Functionally, catalyzes the condensation of the acetyl group of acetyl-CoA with 3-methyl-2-oxobutanoate (2-ketoisovalerate) to form 3-carboxy-3-hydroxy-4-methylpentanoate (2-isopropylmalate). This chain is 2-isopropylmalate synthase, found in Salmonella arizonae (strain ATCC BAA-731 / CDC346-86 / RSK2980).